The sequence spans 245 residues: MADS-box transcription factor 55 (245 aa).

The region spanning 1-61 (MARERREIRR…GKLSQFASSN (61 aa)) is the MADS-box domain. The K-box domain occupies 109–199 (LQLEHSKCSS…RDQMPQVPTA (91 aa)). A disordered region spans residues 197-245 (PTAGLAVPDTENVLTEDGQSSESVMTALNSGSSQDNDDGSDISLKLGLP). A compositionally biased stretch (polar residues) spans 213–224 (DGQSSESVMTAL).

Expressed in roots, shoots and developing panicles. Expressed in shoots.

The protein resides in the nucleus. In terms of biological role, transcription factor that acts as a negative regulator of brassinosteroid signaling. This Oryza sativa subsp. japonica (Rice) protein is MADS-box transcription factor 55 (MADS55).